The following is a 401-amino-acid chain: MHCDVLWHNARLMTLDAGDGGLGSVDDGVVACQDGTIVYAGPAADAPPLQASHVHDCQRRWISPGLIDCHTHLVYAGNRANEFEQRLRGASYAQIAAAGGGIVATVRATRAADDAALLAASLPRLDALLAEGVTTLEIKSGYGLTLEDEIKQLRVARQLATLRQVEVVPTFLGAHAVPPGAQGQTYIDAVCQEMIPAVAAQGLAEAVDVFCEHLAFSPAQAEQVFVAARAHGLQIKIHAEQLSNQHGAALAARYGALSADHIEYLDQAGIDAMANAGTVAVLLPGAFYFTRDTQLPPIPALRAAGVPLALATDCNPGTSPLTSPLLAMNMAATLFRMTVDGCITGFTREAARALGRGNRLGRLRAGMQCDLAIWDIDAPADLVYRMGFNPLHTRVWRGHPC.

Fe(3+) contacts are provided by histidine 70 and histidine 72. Residues histidine 70 and histidine 72 each coordinate Zn(2+). 4-imidazolone-5-propanoate-binding residues include arginine 79, tyrosine 142, and histidine 175. Tyrosine 142 lines the N-formimidoyl-L-glutamate pocket. Residue histidine 238 participates in Fe(3+) binding. Histidine 238 is a binding site for Zn(2+). Residue glutamine 241 coordinates 4-imidazolone-5-propanoate. Fe(3+) is bound at residue aspartate 313. Aspartate 313 lines the Zn(2+) pocket. N-formimidoyl-L-glutamate-binding residues include asparagine 315 and glycine 317. Threonine 318 lines the 4-imidazolone-5-propanoate pocket.

It belongs to the metallo-dependent hydrolases superfamily. HutI family. Zn(2+) serves as cofactor. The cofactor is Fe(3+).

It is found in the cytoplasm. It catalyses the reaction 4-imidazolone-5-propanoate + H2O = N-formimidoyl-L-glutamate. It participates in amino-acid degradation; L-histidine degradation into L-glutamate; N-formimidoyl-L-glutamate from L-histidine: step 3/3. Functionally, catalyzes the hydrolytic cleavage of the carbon-nitrogen bond in imidazolone-5-propanoate to yield N-formimidoyl-L-glutamate. It is the third step in the universal histidine degradation pathway. The polypeptide is Imidazolonepropionase (Xanthomonas campestris pv. campestris (strain 8004)).